The sequence spans 67 residues: Large ribosomal subunit protein bL35 (67 aa).

A compositionally biased stretch (basic residues) spans 1–32 (MPKLKNHSGAKKRFAKTATGKYKRRKAGRKHL). The tract at residues 1–54 (MPKLKNHSGAKKRFAKTATGKYKRRKAGRKHLLTPQSGSRKREMRQTGIIKPES) is disordered.

The protein belongs to the bacterial ribosomal protein bL35 family.

The sequence is that of Large ribosomal subunit protein bL35 from Elusimicrobium minutum (strain Pei191).